Consider the following 551-residue polypeptide: Cation/acetate symporter ActP (551 aa).

14 helical membrane-spanning segments follow: residues 5 to 25 (HWSALSLFVLPALAQAEALTG), 34 to 54 (IQAIVMFLLFVGGTLYITYWA), 77 to 97 (GLAIAGDYMSAASFLGISALV), 104 to 124 (GLIYSIGFLIGWPIILFLIAE), 150 to 170 (LSACGSLVVVALYLIAQMVGA), 184 to 204 (VAVVLVGILMVLYVLFGGMLA), 207 to 227 (WVQIIKAVMLLSGATFMAIMV), 263 to 283 (ISALSLGLALMFGTAGLPHIL), 304 to 324 (GFIGYFYILTFIIGFGAILLV), 356 to 376 (FFLGFISAVAFATILAVVAGL), 406 to 426 (VSKITVIILGIVAIGLGILFE), 430 to 450 (IAFMVGLAFSIAASCNFPIII), 469 to 489 (LGLSTAVILMILGPTIWVTIL), and 498 to 518 (YEYPALFSMIAAFVGTWFFSI).

Belongs to the sodium:solute symporter (SSF) (TC 2.A.21) family.

The protein localises to the cell inner membrane. Transports acetate. The sequence is that of Cation/acetate symporter ActP from Yersinia pestis bv. Antiqua (strain Antiqua).